The following is a 651-amino-acid chain: Nucleolin (651 aa).

Residues Met1–Gln11 show a composition bias toward low complexity. The segment at Met1 to Ser230 is disordered. Positions Glu26–Glu45 are enriched in acidic residues. Low complexity predominate over residues Lys54 to Lys79. Acidic residues predominate over residues Ser89–Glu101. A compositionally biased stretch (basic residues) spans Ile106–Val116. 3 stretches are compositionally biased toward acidic residues: residues Ser122–Glu134, Ser155–Met168, and Ala183–Gln204. A Phosphoserine modification is found at Ser155. Over residues Pro219 to Thr228 the composition is skewed to basic and acidic residues. RRM domains follow at residues Leu233 to Ala309, Arg325 to Glu399, Lys415 to Gly488, and Lys503 to Pro578. A disordered region spans residues Asp574–Asp651. The span at Gly585–Gly644 shows a compositional bias: gly residues.

The protein localises to the nucleus. The protein resides in the nucleolus. In terms of biological role, nucleolin is the major nucleolar protein of growing eukaryotic cells. It is found associated with intranucleolar chromatin and pre-ribosomal particles. It induces chromatin decondensation by binding to histone H1. It is thought to play a role in pre-rRNA transcription and ribosome assembly. In Xenopus laevis (African clawed frog), this protein is Nucleolin (ncl).